We begin with the raw amino-acid sequence, 367 residues long: Peptide chain release factor 2 (367 aa).

Gln249 carries the N5-methylglutamine modification.

Belongs to the prokaryotic/mitochondrial release factor family. In terms of processing, methylated by PrmC. Methylation increases the termination efficiency of RF2.

The protein resides in the cytoplasm. Its function is as follows. Peptide chain release factor 2 directs the termination of translation in response to the peptide chain termination codons UGA and UAA. This Thermotoga sp. (strain RQ2) protein is Peptide chain release factor 2.